A 34-amino-acid chain; its full sequence is uncharacterized protein (34 aa).

This is an uncharacterized protein from Escherichia coli (Bacteriophage T4).